A 275-amino-acid polypeptide reads, in one-letter code: Large ribosomal subunit protein uL2 (275 aa).

A disordered region spans residues 224–275; that stretch reads VMNPVDHPHGGGEGKSPIGRPSPVTPWGKPTLGYKTRKKNKASDKFIIKRRK. Basic and acidic residues predominate over residues 264-275; it reads KASDKFIIKRRK.

It belongs to the universal ribosomal protein uL2 family. As to quaternary structure, part of the 50S ribosomal subunit. Forms a bridge to the 30S subunit in the 70S ribosome.

Its function is as follows. One of the primary rRNA binding proteins. Required for association of the 30S and 50S subunits to form the 70S ribosome, for tRNA binding and peptide bond formation. It has been suggested to have peptidyltransferase activity; this is somewhat controversial. Makes several contacts with the 16S rRNA in the 70S ribosome. The chain is Large ribosomal subunit protein uL2 from Acetivibrio thermocellus (strain ATCC 27405 / DSM 1237 / JCM 9322 / NBRC 103400 / NCIMB 10682 / NRRL B-4536 / VPI 7372) (Clostridium thermocellum).